A 239-amino-acid chain; its full sequence is Ribonuclease PH (239 aa).

Phosphate is bound by residues R86 and 124 to 126; that span reads GTR.

This sequence belongs to the RNase PH family. As to quaternary structure, homohexameric ring arranged as a trimer of dimers.

The catalysed reaction is tRNA(n+1) + phosphate = tRNA(n) + a ribonucleoside 5'-diphosphate. Functionally, phosphorolytic 3'-5' exoribonuclease that plays an important role in tRNA 3'-end maturation. Removes nucleotide residues following the 3'-CCA terminus of tRNAs; can also add nucleotides to the ends of RNA molecules by using nucleoside diphosphates as substrates, but this may not be physiologically important. Probably plays a role in initiation of 16S rRNA degradation (leading to ribosome degradation) during starvation. The protein is Ribonuclease PH of Marinomonas sp. (strain MWYL1).